The chain runs to 287 residues: Shikimate dehydrogenase (NADP(+)) (287 aa).

Residues 21–23 (SKS) and Thr-68 each bind shikimate. Lys-72 acts as the Proton acceptor in catalysis. Shikimate is bound by residues Asn-93 and Asp-109. NADP(+) contacts are provided by residues 133-137 (GAGGA), 157-162 (NRTQTK), and Met-226. Shikimate is bound at residue Tyr-228. NADP(+) is bound at residue Gly-250.

The protein belongs to the shikimate dehydrogenase family. Homodimer.

It catalyses the reaction shikimate + NADP(+) = 3-dehydroshikimate + NADPH + H(+). It functions in the pathway metabolic intermediate biosynthesis; chorismate biosynthesis; chorismate from D-erythrose 4-phosphate and phosphoenolpyruvate: step 4/7. Functionally, involved in the biosynthesis of the chorismate, which leads to the biosynthesis of aromatic amino acids. Catalyzes the reversible NADPH linked reduction of 3-dehydroshikimate (DHSA) to yield shikimate (SA). The sequence is that of Shikimate dehydrogenase (NADP(+)) from Shewanella oneidensis (strain ATCC 700550 / JCM 31522 / CIP 106686 / LMG 19005 / NCIMB 14063 / MR-1).